The sequence spans 490 residues: Betaine aldehyde dehydrogenase (490 aa).

D93 serves as a coordination point for K(+). Residue 150–152 participates in NAD(+) binding; that stretch reads GAW. The active-site Charge relay system is K162. 176–179 is an NAD(+) binding site; sequence KPSE. Position 180 (V180) interacts with K(+). Residue 230–233 coordinates NAD(+); that stretch reads GIAS. Residue L246 participates in K(+) binding. E252 (proton acceptor) is an active-site residue. NAD(+) is bound by residues G254, C286, and E387. The active-site Nucleophile is the C286. At C286 the chain carries Cysteine sulfenic acid (-SOH). The K(+) site is built by K457 and G460. Catalysis depends on E464, which acts as the Charge relay system.

It belongs to the aldehyde dehydrogenase family. Dimer of dimers. The cofactor is K(+).

It catalyses the reaction betaine aldehyde + NAD(+) + H2O = glycine betaine + NADH + 2 H(+). The protein operates within amine and polyamine biosynthesis; betaine biosynthesis via choline pathway; betaine from betaine aldehyde: step 1/1. In terms of biological role, involved in the biosynthesis of the osmoprotectant glycine betaine. Catalyzes the irreversible oxidation of betaine aldehyde to the corresponding acid. This is Betaine aldehyde dehydrogenase from Yersinia pseudotuberculosis serotype O:3 (strain YPIII).